We begin with the raw amino-acid sequence, 352 residues long: Histidine biosynthesis bifunctional protein HisB (352 aa).

The interval 1 to 163 (MKKILFIDRD…MVASAIINDA (163 aa)) is histidinol-phosphatase. Asp8 (nucleophile) is an active-site residue. Mg(2+) contacts are provided by Asp8 and Asp10. Asp10 functions as the Proton donor in the catalytic mechanism. The Zn(2+) site is built by Cys91, His93, Cys99, and Cys101. Residue Asp128 coordinates Mg(2+). The tract at residues 164–352 (RKASVQRKTK…NYLPSTKGVL (189 aa)) is imidazoleglycerol-phosphate dehydratase.

It in the N-terminal section; belongs to the histidinol-phosphatase family. In the C-terminal section; belongs to the imidazoleglycerol-phosphate dehydratase family. Requires Mg(2+) as cofactor. It depends on Zn(2+) as a cofactor.

Its subcellular location is the cytoplasm. It carries out the reaction D-erythro-1-(imidazol-4-yl)glycerol 3-phosphate = 3-(imidazol-4-yl)-2-oxopropyl phosphate + H2O. It catalyses the reaction L-histidinol phosphate + H2O = L-histidinol + phosphate. The protein operates within amino-acid biosynthesis; L-histidine biosynthesis; L-histidine from 5-phospho-alpha-D-ribose 1-diphosphate: step 6/9. Its pathway is amino-acid biosynthesis; L-histidine biosynthesis; L-histidine from 5-phospho-alpha-D-ribose 1-diphosphate: step 8/9. The polypeptide is Histidine biosynthesis bifunctional protein HisB (Legionella pneumophila (strain Lens)).